The primary structure comprises 636 residues: Chaperone protein HtpG (636 aa).

Positions 1–349 (MAKHQFQTEV…SEDLPLNVSR (349 aa)) are a; substrate-binding. Positions 350–562 (EILQENRILA…ADAQMAAMAH (213 aa)) are b. The segment at 563 to 636 (MFRAMGQAMP…RLSRITAKAL (74 aa)) is c.

The protein belongs to the heat shock protein 90 family. Homodimer.

Its subcellular location is the cytoplasm. Its function is as follows. Molecular chaperone. Has ATPase activity. The chain is Chaperone protein HtpG from Aliarcobacter butzleri (strain RM4018) (Arcobacter butzleri).